The following is a 384-amino-acid chain: MSHHRRDSGGDVVHVIPTNNPPPDNWFPNLGDSAVWATEDDYNRAWAMNPDNTSGDNNGPPNKKTRGSPSSSSATTTSAASNRTKAIGKMFFKTKLCCKFRAGTCPYITNCNFAHTVEELRRPPPNWQEIVAAHEEERSGGMGTPTVSVVEIPREEFQIPSLVSSTAESGRSFKGRHCKKFYTEEGCPYGESCTFLHDEASRNRESVAISLGPGGYGSGGGGGSGGGSVGGGGSSSNVVVLGGGGGSGSGSGIQILKPSNWKTRICNKWEITGYCPFGAKCHFAHGAAELHRFGGGLVEEEGKDGVSPNPDTKQTVQNPKGLSDTTTLLSPGVPHNADASYHTGVALQRASSAVTQKPGIRTHQKWKGPAKISRIYGDWIDDIE.

Disordered regions lie at residues Met-1–Asp-32 and Trp-46–Ser-81. Over residues Pro-50–Pro-60 the composition is skewed to polar residues. Over residues Ser-70–Ser-81 the composition is skewed to low complexity. 2 consecutive C3H1-type zinc fingers follow at residues Phe-91–Glu-118 and Ser-172–Ala-200. Residues Leu-211 to Gly-231 form a disordered region. Residues Gly-212–Gly-231 show a composition bias toward gly residues. The C3H1-type 3 zinc-finger motif lies at Asn-260–Ala-288. The segment at Glu-299–His-335 is disordered. Positions Asn-309–Leu-329 are enriched in polar residues.

This chain is Zinc finger CCCH domain-containing protein 12, found in Arabidopsis thaliana (Mouse-ear cress).